We begin with the raw amino-acid sequence, 196 residues long: Auxin-induced protein 22B (196 aa).

An EAR-like (transcriptional repression) motif is present at residues 18–22 (LRLGL). The disordered stretch occupies residues 44-74 (RQVRETSQDSVSISKASHHQQHVETVSAPPP). In terms of domain architecture, PB1 spans 99 to 186 (GIFVKVSMDG…SCKRLRIMKG (88 aa)).

The protein belongs to the Aux/IAA family. Homodimers and heterodimers.

Its subcellular location is the nucleus. In terms of biological role, aux/IAA proteins are short-lived transcriptional factors that function as repressors of early auxin response genes at low auxin concentrations. Repression is thought to result from the interaction with auxin response factors (ARFs), proteins that bind to the auxin-responsive promoter element (AuxRE). Formation of heterodimers with ARF proteins may alter their ability to modulate early auxin response genes expression. This chain is Auxin-induced protein 22B (AUX22B), found in Vigna radiata var. radiata (Mung bean).